The sequence spans 623 residues: Phosphomethylpyrimidine synthase (623 aa).

Residues N221, M250, Y279, H315, 335 to 337 (SRG), 376 to 379 (DGLR), and E415 contribute to the substrate site. H419 contacts Zn(2+). Y442 is a substrate binding site. Residue H483 coordinates Zn(2+). [4Fe-4S] cluster is bound by residues C563, C566, and C571.

Belongs to the ThiC family. As to quaternary structure, homodimer. [4Fe-4S] cluster serves as cofactor.

It catalyses the reaction 5-amino-1-(5-phospho-beta-D-ribosyl)imidazole + S-adenosyl-L-methionine = 4-amino-2-methyl-5-(phosphooxymethyl)pyrimidine + CO + 5'-deoxyadenosine + formate + L-methionine + 3 H(+). Its pathway is cofactor biosynthesis; thiamine diphosphate biosynthesis. Functionally, catalyzes the synthesis of the hydroxymethylpyrimidine phosphate (HMP-P) moiety of thiamine from aminoimidazole ribotide (AIR) in a radical S-adenosyl-L-methionine (SAM)-dependent reaction. The chain is Phosphomethylpyrimidine synthase from Parvibaculum lavamentivorans (strain DS-1 / DSM 13023 / NCIMB 13966).